The following is a 271-amino-acid chain: Putative phosphoenolpyruvate synthase regulatory protein (271 aa).

151-158 (GVSRSGKT) lines the ADP pocket.

It belongs to the pyruvate, phosphate/water dikinase regulatory protein family. PSRP subfamily.

It catalyses the reaction [pyruvate, water dikinase] + ADP = [pyruvate, water dikinase]-phosphate + AMP + H(+). The catalysed reaction is [pyruvate, water dikinase]-phosphate + phosphate + H(+) = [pyruvate, water dikinase] + diphosphate. Its function is as follows. Bifunctional serine/threonine kinase and phosphorylase involved in the regulation of the phosphoenolpyruvate synthase (PEPS) by catalyzing its phosphorylation/dephosphorylation. The sequence is that of Putative phosphoenolpyruvate synthase regulatory protein from Burkholderia ambifaria (strain MC40-6).